Consider the following 432-residue polypeptide: Serine hydroxymethyltransferase (432 aa).

(6S)-5,6,7,8-tetrahydrofolate contacts are provided by residues L127 and G131 to L133. K236 carries the N6-(pyridoxal phosphate)lysine modification.

It belongs to the SHMT family. In terms of assembly, homodimer. The cofactor is pyridoxal 5'-phosphate.

The protein localises to the cytoplasm. The enzyme catalyses (6R)-5,10-methylene-5,6,7,8-tetrahydrofolate + glycine + H2O = (6S)-5,6,7,8-tetrahydrofolate + L-serine. Its pathway is one-carbon metabolism; tetrahydrofolate interconversion. It participates in amino-acid biosynthesis; glycine biosynthesis; glycine from L-serine: step 1/1. In terms of biological role, catalyzes the reversible interconversion of serine and glycine with tetrahydrofolate (THF) serving as the one-carbon carrier. This reaction serves as the major source of one-carbon groups required for the biosynthesis of purines, thymidylate, methionine, and other important biomolecules. Also exhibits THF-independent aldolase activity toward beta-hydroxyamino acids, producing glycine and aldehydes, via a retro-aldol mechanism. The sequence is that of Serine hydroxymethyltransferase from Rhizobium etli (strain ATCC 51251 / DSM 11541 / JCM 21823 / NBRC 15573 / CFN 42).